The following is a 277-amino-acid chain: Basic leucine zipper 9 (277 aa).

Residues 73–141 (ADSPVSANKP…ESAKRSRRRK (69 aa)) form a disordered region. Phosphoserine is present on Ser100. Residues 109–118 (AGQSEMTNDP) show a composition bias toward polar residues. One can recognise a bZIP domain in the interval 120 to 183 (DLKRIRRMNS…RSAGTNNRVL (64 aa)). Residues 122–141 (KRIRRMNSNRESAKRSRRRK) are basic motif. Positions 124 to 131 (IRRMNSNR) match the Nuclear localization signal motif. Positions 148–162 (LETQVDSLKGDNSTL) are leucine-zipper.

Belongs to the bZIP family. As to quaternary structure, homodimer. Interacts with BZIP1, BZIP2, BZIP10, BZIP11, BZIP25, BZIP44, BZIP53 and BZIP63. In terms of processing, phosphorylated. In terms of tissue distribution, expressed in roots, shoots, stems, young leaves, and flowers, mostly in vascular tissues (e.g. phloem).

The protein localises to the nucleus. In terms of biological role, transcription factor. The chain is Basic leucine zipper 9 (BZIP9) from Arabidopsis thaliana (Mouse-ear cress).